A 413-amino-acid chain; its full sequence is Multifunctional CCA protein (413 aa).

ATP is bound by residues glycine 8 and arginine 11. CTP is bound by residues glycine 8 and arginine 11. Aspartate 21 and aspartate 23 together coordinate Mg(2+). The ATP site is built by arginine 91, arginine 143, and arginine 146. Positions 91, 143, and 146 each coordinate CTP. Residues 232-333 (TGVHVMMVID…VRLLERADAL (102 aa)) form the HD domain.

It belongs to the tRNA nucleotidyltransferase/poly(A) polymerase family. Bacterial CCA-adding enzyme type 1 subfamily. Monomer. Can also form homodimers and oligomers. It depends on Mg(2+) as a cofactor. Ni(2+) is required as a cofactor.

It carries out the reaction a tRNA precursor + 2 CTP + ATP = a tRNA with a 3' CCA end + 3 diphosphate. The catalysed reaction is a tRNA with a 3' CCA end + 2 CTP + ATP = a tRNA with a 3' CCACCA end + 3 diphosphate. Its function is as follows. Catalyzes the addition and repair of the essential 3'-terminal CCA sequence in tRNAs without using a nucleic acid template. Adds these three nucleotides in the order of C, C, and A to the tRNA nucleotide-73, using CTP and ATP as substrates and producing inorganic pyrophosphate. tRNA 3'-terminal CCA addition is required both for tRNA processing and repair. Also involved in tRNA surveillance by mediating tandem CCA addition to generate a CCACCA at the 3' terminus of unstable tRNAs. While stable tRNAs receive only 3'-terminal CCA, unstable tRNAs are marked with CCACCA and rapidly degraded. In Burkholderia pseudomallei (strain K96243), this protein is Multifunctional CCA protein.